A 419-amino-acid chain; its full sequence is BTB/POZ domain-containing protein KCTD20 (419 aa).

One can recognise a BTB domain in the interval 117–191 (EKVTLLVDGT…YKTGIINCPD (75 aa)).

Interacts with AKT1; AKT2 and AKT3. Associates with PP2CA. Part of a complex containing MARK4.

It localises to the cytoplasm. Functionally, promotes the phosphorylation of AKT family members. The polypeptide is BTB/POZ domain-containing protein KCTD20 (KCTD20) (Homo sapiens (Human)).